The chain runs to 356 residues: Malate dehydrogenase, glyoxysomal (356 aa).

The transit peptide at 1–36 (MQPIPDVNQRIARISAHLHPPKYQMEESSVLRRANC) directs the protein to the glyoxysome. NAD(+) is bound by residues 51-57 (GAAGGIG) and D77. Positions 124 and 130 each coordinate substrate. NAD(+)-binding positions include N137 and 160–162 (ISN). Substrate contacts are provided by N162 and R196. Catalysis depends on H220, which acts as the Proton acceptor. M271 is an NAD(+) binding site.

It belongs to the LDH/MDH superfamily. MDH type 1 family. Homodimer.

The protein localises to the glyoxysome. The enzyme catalyses (S)-malate + NAD(+) = oxaloacetate + NADH + H(+). The chain is Malate dehydrogenase, glyoxysomal (MDHG) from Cucumis sativus (Cucumber).